The primary structure comprises 457 residues: Ribosomal protein uS12 methylthiotransferase RimO (457 aa).

The 120-residue stretch at 9-128 (KKVHFISLGC…ILKNSDEGEK (120 aa)) folds into the MTTase N-terminal domain. [4Fe-4S] cluster contacts are provided by Cys-18, Cys-54, Cys-88, Cys-163, Cys-167, and Cys-170. The 236-residue stretch at 149 to 384 (SQPGHRAYLK…MEVQQNISRE (236 aa)) folds into the Radical SAM core domain. In terms of domain architecture, TRAM spans 387–455 (SDFVGKTLQV…EYDLIGEIVV (69 aa)).

Belongs to the methylthiotransferase family. RimO subfamily. Requires [4Fe-4S] cluster as cofactor.

Its subcellular location is the cytoplasm. The catalysed reaction is L-aspartate(89)-[ribosomal protein uS12]-hydrogen + (sulfur carrier)-SH + AH2 + 2 S-adenosyl-L-methionine = 3-methylsulfanyl-L-aspartate(89)-[ribosomal protein uS12]-hydrogen + (sulfur carrier)-H + 5'-deoxyadenosine + L-methionine + A + S-adenosyl-L-homocysteine + 2 H(+). Catalyzes the methylthiolation of an aspartic acid residue of ribosomal protein uS12. The polypeptide is Ribosomal protein uS12 methylthiotransferase RimO (Bdellovibrio bacteriovorus (strain ATCC 15356 / DSM 50701 / NCIMB 9529 / HD100)).